Reading from the N-terminus, the 194-residue chain is Probable GTP-binding protein EngB (194 aa).

The 173-residue stretch at Gly22–Ile194 folds into the EngB-type G domain. Residues Gly30–Ser37, Gly57–Thr61, Asp75–Gly78, Thr142–Asp145, and Phe175–Ser177 each bind GTP. 2 residues coordinate Mg(2+): Ser37 and Thr59.

It belongs to the TRAFAC class TrmE-Era-EngA-EngB-Septin-like GTPase superfamily. EngB GTPase family. Requires Mg(2+) as cofactor.

Its function is as follows. Necessary for normal cell division and for the maintenance of normal septation. The sequence is that of Probable GTP-binding protein EngB from Leuconostoc mesenteroides subsp. mesenteroides (strain ATCC 8293 / DSM 20343 / BCRC 11652 / CCM 1803 / JCM 6124 / NCDO 523 / NBRC 100496 / NCIMB 8023 / NCTC 12954 / NRRL B-1118 / 37Y).